The sequence spans 1273 residues: DNA-directed RNA polymerase subunit beta (1273 aa).

Residues 1252 to 1273 form a disordered region; the sequence is ADDQDLVVSSNDEEVSENDERS.

This sequence belongs to the RNA polymerase beta chain family. In terms of assembly, the RNAP catalytic core consists of 2 alpha, 1 beta, 1 beta' and 1 omega subunit. When a sigma factor is associated with the core the holoenzyme is formed, which can initiate transcription.

The catalysed reaction is RNA(n) + a ribonucleoside 5'-triphosphate = RNA(n+1) + diphosphate. Its function is as follows. DNA-dependent RNA polymerase catalyzes the transcription of DNA into RNA using the four ribonucleoside triphosphates as substrates. The sequence is that of DNA-directed RNA polymerase subunit beta from Dehalococcoides mccartyi (strain CBDB1).